A 151-amino-acid chain; its full sequence is Transcriptional regulator MraZ (151 aa).

2 consecutive SpoVT-AbrB domains span residues 5–52 (ANAI…PLSE) and 81–124 (AVDL…DEDA).

This sequence belongs to the MraZ family. As to quaternary structure, forms oligomers.

It is found in the cytoplasm. Its subcellular location is the nucleoid. This is Transcriptional regulator MraZ from Pseudomonas syringae pv. syringae (strain B728a).